Consider the following 189-residue polypeptide: Putative 3-methyladenine DNA glycosylase (189 aa).

It belongs to the DNA glycosylase MPG family.

This chain is Putative 3-methyladenine DNA glycosylase (mag), found in Corynebacterium glutamicum (strain ATCC 13032 / DSM 20300 / JCM 1318 / BCRC 11384 / CCUG 27702 / LMG 3730 / NBRC 12168 / NCIMB 10025 / NRRL B-2784 / 534).